The following is a 113-amino-acid chain: Cytochrome c oxidase subunit 7A2-like, mitochondrial (113 aa).

Residues 1-54 (MYYKFSSFTQKLAGAWASEAYTPQGLKPVSTEAPPIIFATPTKLTSSVTAYDYS) constitute a mitochondrion transit peptide. N6-acetyllysine is present on Lys-68. The helical transmembrane segment at 81 to 106 (PDQMLYRTTMALTLGGTIYCLIALYM) threads the bilayer.

The protein belongs to the cytochrome c oxidase VIIa family. In terms of assembly, interacts with the mitochondrial respiratory complexes III (CIII) and IV (CIV), promoting their association.

The protein resides in the mitochondrion inner membrane. It participates in energy metabolism; oxidative phosphorylation. In terms of biological role, assembly factor that mediates the formation of some mitochondrial respiratory supercomplexes (respirasomes), thereby promoting oxidative phosphorylation and energy metabolism. Acts as a molecular adapter that associates with both mitochondrial respiratory complexes III (CIII) and IV (CIV), promoting their association. Mediates the formation of various mitochondrial respiratory supercomplexes, such as MCIII(2)IV(2), composed of two CIII and two CIV, and the CS-respirasome (MCI(1)III(2)IV(2)), composed of one CI, two CIII and two CIV. Not involved in the formation of the canonical respirasome (MCI(1)III(2)IV(1)), composed of one CI, two CIII and one CIV. The formation of different respirasomes is important for cell adaptation to oxygen conditions and prevent metabolic exhaustion: supercomplexes mediated by COX7A2L/SCAF1 are required to maintain oxidative phosphorylation upon low oxygen conditions and promote metabolic rewiring toward glycolysis. The chain is Cytochrome c oxidase subunit 7A2-like, mitochondrial from Mus musculus (Mouse).